Reading from the N-terminus, the 377-residue chain is Chaperone protein DnaJ (377 aa).

Residues 5–69 (EFYDRLGVSK…QKRSAYDQYG (65 aa)) enclose the J domain. A CR-type zinc finger spans residues 133-215 (GVEKDVSYHR…CHGTGHEKET (83 aa)). Positions 146, 149, 163, 166, 189, 192, 203, and 206 each coordinate Zn(2+). CXXCXGXG motif repeat units lie at residues 146–153 (CHTCAGSG), 163–170 (CGRCHGSG), 189–196 (CDVCHGSG), and 203–210 (CQTCHGTG).

Belongs to the DnaJ family. In terms of assembly, homodimer. It depends on Zn(2+) as a cofactor.

The protein resides in the cytoplasm. Functionally, participates actively in the response to hyperosmotic and heat shock by preventing the aggregation of stress-denatured proteins and by disaggregating proteins, also in an autonomous, DnaK-independent fashion. Unfolded proteins bind initially to DnaJ; upon interaction with the DnaJ-bound protein, DnaK hydrolyzes its bound ATP, resulting in the formation of a stable complex. GrpE releases ADP from DnaK; ATP binding to DnaK triggers the release of the substrate protein, thus completing the reaction cycle. Several rounds of ATP-dependent interactions between DnaJ, DnaK and GrpE are required for fully efficient folding. Also involved, together with DnaK and GrpE, in the DNA replication of plasmids through activation of initiation proteins. The protein is Chaperone protein DnaJ of Streptococcus uberis (strain ATCC BAA-854 / 0140J).